Reading from the N-terminus, the 80-residue chain is Exodeoxyribonuclease 7 small subunit (80 aa).

It belongs to the XseB family. Heterooligomer composed of large and small subunits.

The protein localises to the cytoplasm. The catalysed reaction is Exonucleolytic cleavage in either 5'- to 3'- or 3'- to 5'-direction to yield nucleoside 5'-phosphates.. Its function is as follows. Bidirectionally degrades single-stranded DNA into large acid-insoluble oligonucleotides, which are then degraded further into small acid-soluble oligonucleotides. In Salmonella paratyphi B (strain ATCC BAA-1250 / SPB7), this protein is Exodeoxyribonuclease 7 small subunit.